A 252-amino-acid polypeptide reads, in one-letter code: Imidazole glycerol phosphate synthase subunit HisF (252 aa).

Catalysis depends on residues Asp-11 and Asp-130.

Belongs to the HisA/HisF family. Heterodimer of HisH and HisF.

It is found in the cytoplasm. It catalyses the reaction 5-[(5-phospho-1-deoxy-D-ribulos-1-ylimino)methylamino]-1-(5-phospho-beta-D-ribosyl)imidazole-4-carboxamide + L-glutamine = D-erythro-1-(imidazol-4-yl)glycerol 3-phosphate + 5-amino-1-(5-phospho-beta-D-ribosyl)imidazole-4-carboxamide + L-glutamate + H(+). The protein operates within amino-acid biosynthesis; L-histidine biosynthesis; L-histidine from 5-phospho-alpha-D-ribose 1-diphosphate: step 5/9. IGPS catalyzes the conversion of PRFAR and glutamine to IGP, AICAR and glutamate. The HisF subunit catalyzes the cyclization activity that produces IGP and AICAR from PRFAR using the ammonia provided by the HisH subunit. The chain is Imidazole glycerol phosphate synthase subunit HisF from Streptococcus sanguinis (strain SK36).